A 124-amino-acid chain; its full sequence is WAP four-disulfide core domain protein 2 (124 aa).

An N-terminal signal peptide occupies residues 1 to 27 (MPACRPGPLAGALLLGLLLLGLPRVPG). WAP domains lie at 29–73 (EVEK…CHLP) and 74–123 (NEKE…VTPI). Cystine bridges form between Cys36/Cys62, Cys45/Cys66, Cys49/Cys61, Cys55/Cys70, Cys80/Cys110, Cys93/Cys114, Cys97/Cys109, and Cys103/Cys119. N-linked (GlcNAc...) asparagine glycosylation occurs at Asn44.

As to quaternary structure, homotrimer; disulfide-linked. As to expression, epididymis. Highest levels are found in the caput and proximal cauda regions. Lower levels in the distal cauda. Not detected in the efferent ducts.

The protein resides in the secreted. Its function is as follows. Broad range protease inhibitor. Possible function in sperm maturation. The sequence is that of WAP four-disulfide core domain protein 2 (WFDC2) from Canis lupus familiaris (Dog).